Consider the following 82-residue polypeptide: EMBRYO SURROUNDING FACTOR 1.2 (82 aa).

Residues 1 to 23 (MKSQTVLISIFIFSFFALHQCMQ) form the signal peptide. Disulfide bonds link cysteine 40–cysteine 56, cysteine 45–cysteine 77, cysteine 54–cysteine 71, and cysteine 57–cysteine 64.

The protein belongs to the MEG family. Expressed exclusively in ovule embryo sacs and in early developing endosperms.

Its function is as follows. Maternally-contributed central cell peptide regulating suspensor development and correct auxin distribution in early developing embryos. The protein is EMBRYO SURROUNDING FACTOR 1.2 (ESF1.2) of Arabidopsis thaliana (Mouse-ear cress).